Reading from the N-terminus, the 175-residue chain is Ribosome maturation factor RimM (175 aa).

One can recognise a PRC barrel domain in the interval 97–175 (EGEFYWHQLE…RMVVDWDPEF (79 aa)).

Belongs to the RimM family. In terms of assembly, binds ribosomal protein uS19.

The protein localises to the cytoplasm. An accessory protein needed during the final step in the assembly of 30S ribosomal subunit, possibly for assembly of the head region. Essential for efficient processing of 16S rRNA. May be needed both before and after RbfA during the maturation of 16S rRNA. It has affinity for free ribosomal 30S subunits but not for 70S ribosomes. The protein is Ribosome maturation factor RimM of Marinobacter nauticus (strain ATCC 700491 / DSM 11845 / VT8) (Marinobacter aquaeolei).